The chain runs to 139 residues: Spermatogenesis-associated protein 33 (139 aa).

The interaction with ATG16L1 stretch occupies residues 1–67 (MVTHAAGART…TAKHPPPAAS (67 aa)). The disordered stretch occupies residues 1-83 (MVTHAAGART…VKQKSSRKKV (83 aa)). Positions 25 to 50 (KSKEKLMEKHSQEARQADRESEKPVD) are enriched in basic and acidic residues. The interval 68-139 (LEEKPDVKQK…ADAYNSHLKE (72 aa)) is interaction with VDAC2. The short motif at 86-91 (PQIIIT) is the PQIIIT element. S94 is subject to Phosphoserine. Residues 97–109 (TLVSCSSSGSDQQ) are compositionally biased toward polar residues. Residues 97–139 (TLVSCSSSGSDQQRTIREPEDWGPYRRHRNPSTADAYNSHLKE) are disordered. The segment covering 110-120 (RTIREPEDWGP) has biased composition (basic and acidic residues).

In terms of assembly, interacts (via PQIIIT motif) with PPP3R1, PPP3R2, PPP3CA, PPP3CB and PPP3CC. Interacts with VDAC2. Interacts with ATG16L1 (via WD repeats).

Its subcellular location is the cytoplasm. It is found in the cytosol. It localises to the nucleus. The protein localises to the mitochondrion. Its function is as follows. Plays an important role in sperm motility and male fertility. Required for sperm midpiece flexibility and for the localization of sperm calcineurin to the mitochondria. Promotes mitophagy as well as acts as an autophagy mediator in male germline cells. Links damaged mitochondria to autophagosomes via its binding to the outer mitochondrial membrane protein VDAC2, as well as to key autophagy machinery component ATG16L1. The polypeptide is Spermatogenesis-associated protein 33 (SPATA33) (Homo sapiens (Human)).